We begin with the raw amino-acid sequence, 296 residues long: Glycine N-acyltransferase (296 aa).

3 positions are modified to N6-acetyllysine; alternate: Lys-16, Lys-127, and Lys-141. Lys-16, Lys-127, and Lys-141 each carry N6-succinyllysine; alternate. Lys-159 carries the N6-acetyllysine modification. N6-succinyllysine is present on Lys-169. An N6-acetyllysine; alternate mark is found at Lys-183 and Lys-256. N6-succinyllysine; alternate occurs at positions 183 and 256.

The protein belongs to the glycine N-acyltransferase family. As to expression, predominantly expressed in liver (at protein level) and kidney. Down-regulated in hepatocellular carcinoma and other liver cancers.

The protein resides in the mitochondrion. It catalyses the reaction an acyl-CoA + glycine = an N-acylglycine + CoA + H(+). The enzyme catalyses benzoyl-CoA + glycine = N-benzoylglycine + CoA + H(+). Functionally, mitochondrial acyltransferase which transfers an acyl group to the N-terminus of glycine and glutamine, although much less efficiently. Can conjugate numerous substrates to form a variety of N-acylglycines, with a preference for benzoyl-CoA over phenylacetyl-CoA as acyl donors. Thereby detoxify xenobiotics, such as benzoic acid or salicylic acid, and endogenous organic acids, such as isovaleric acid. The sequence is that of Glycine N-acyltransferase (GLYAT) from Homo sapiens (Human).